A 295-amino-acid chain; its full sequence is (R)-3-hydroxydecanoyl-ACP:CoA transacylase (295 aa).

The 227-residue stretch at 28-254 folds into the AB hydrolase-1 domain; it reads NTIILINGSL…VIRDAGHFLD (227 aa).

It participates in polyester biosynthesis; polyhydroxyalkanoate biosynthesis. Functionally, catalyzes the transfer of the acyl moiety from in vitro synthesized 3-hydroxydecanoyl-CoA to acyl carrier protein. This Ectopseudomonas oleovorans (Pseudomonas oleovorans) protein is (R)-3-hydroxydecanoyl-ACP:CoA transacylase (phaG).